Reading from the N-terminus, the 346-residue chain is Dihydroorotase (346 aa).

Zn(2+)-binding residues include His-14 and His-16. Substrate is bound by residues 16–18 and Asn-42; that span reads HLR. Residues Lys-100, His-137, and His-175 each coordinate Zn(2+). N6-carboxylysine is present on Lys-100. Residue His-137 participates in substrate binding. A substrate-binding site is contributed by Leu-220. Residue Asp-248 coordinates Zn(2+). The active site involves Asp-248. His-252 and Ala-264 together coordinate substrate.

This sequence belongs to the metallo-dependent hydrolases superfamily. DHOase family. Class II DHOase subfamily. In terms of assembly, homodimer. The cofactor is Zn(2+).

It carries out the reaction (S)-dihydroorotate + H2O = N-carbamoyl-L-aspartate + H(+). It functions in the pathway pyrimidine metabolism; UMP biosynthesis via de novo pathway; (S)-dihydroorotate from bicarbonate: step 3/3. Functionally, catalyzes the reversible cyclization of carbamoyl aspartate to dihydroorotate. In Novosphingobium aromaticivorans (strain ATCC 700278 / DSM 12444 / CCUG 56034 / CIP 105152 / NBRC 16084 / F199), this protein is Dihydroorotase.